Here is a 272-residue protein sequence, read N- to C-terminus: Endoplasmic reticulum resident protein 27 (272 aa).

The signal sequence occupies residues 1 to 25; sequence MKITRSRCLILSFVLVCGLVPEVTA. Positions 39-152 constitute a Thioredoxin domain; sequence EPIWLTDVPA…WVTEYSPMIA (114 aa). Residues N91 and N100 are each glycosylated (N-linked (GlcNAc...) asparagine). Positions 230-233 are PDIA3-binding site; the sequence is DKWD. The short motif at 269–272 is the Prevents secretion from ER element; sequence KEEL.

It belongs to the protein disulfide isomerase family. In terms of assembly, interacts with PDIA3.

The protein localises to the endoplasmic reticulum lumen. Specifically binds unfolded proteins and may recruit protein disulfide isomerase PDIA3 to unfolded substrates. Binds protein substrates via a hydrophobic pocket in the C-terminal domain. May play a role in the unfolded stress response. The protein is Endoplasmic reticulum resident protein 27 (Erp27) of Mus musculus (Mouse).